Consider the following 381-residue polypeptide: Succinate--CoA ligase [ADP-forming] subunit beta (381 aa).

Residues 9–236 (KELLRVAGVP…ESSEAPSEVD (228 aa)) enclose the ATP-grasp domain. ATP-binding positions include K45, 52–54 (GRG), A94, and E99. Residues N191 and D205 each coordinate Mg(2+). Residues N256 and 313–315 (GIT) contribute to the substrate site.

Belongs to the succinate/malate CoA ligase beta subunit family. In terms of assembly, heterotetramer of two alpha and two beta subunits. Requires Mg(2+) as cofactor.

It carries out the reaction succinate + ATP + CoA = succinyl-CoA + ADP + phosphate. The catalysed reaction is GTP + succinate + CoA = succinyl-CoA + GDP + phosphate. Its pathway is carbohydrate metabolism; tricarboxylic acid cycle; succinate from succinyl-CoA (ligase route): step 1/1. Its function is as follows. Succinyl-CoA synthetase functions in the citric acid cycle (TCA), coupling the hydrolysis of succinyl-CoA to the synthesis of either ATP or GTP and thus represents the only step of substrate-level phosphorylation in the TCA. The beta subunit provides nucleotide specificity of the enzyme and binds the substrate succinate, while the binding sites for coenzyme A and phosphate are found in the alpha subunit. This is Succinate--CoA ligase [ADP-forming] subunit beta from Gemmatimonas aurantiaca (strain DSM 14586 / JCM 11422 / NBRC 100505 / T-27).